The primary structure comprises 134 residues: MKVVHTVGKRKTAIARATAKEGKGRIRINKKPIEIVEPKYINAKLMEPIILAGDVVDGIDIDITVNGGGIVGQMDAARTALGKAIVEFTGDMELKDRFVHYDRTILISDARRTEPHKPSKSTKGPRAKRQKSYR.

The disordered stretch occupies residues 109 to 134 (DARRTEPHKPSKSTKGPRAKRQKSYR). Positions 118-134 (PSKSTKGPRAKRQKSYR) are enriched in basic residues.

The protein belongs to the universal ribosomal protein uS9 family.

This is Small ribosomal subunit protein uS9 from Methanococcus aeolicus (strain ATCC BAA-1280 / DSM 17508 / OCM 812 / Nankai-3).